The primary structure comprises 101 residues: Small ribosomal subunit protein uS14 (101 aa).

This sequence belongs to the universal ribosomal protein uS14 family. In terms of assembly, part of the 30S ribosomal subunit. Contacts proteins S3 and S10.

Binds 16S rRNA, required for the assembly of 30S particles and may also be responsible for determining the conformation of the 16S rRNA at the A site. This chain is Small ribosomal subunit protein uS14, found in Francisella tularensis subsp. tularensis (strain FSC 198).